The chain runs to 68 residues: MSLEERVMELESRMAFQDDTIQALNDVLVKQRRELDHLQLQMAAMLKRQEEMGSQFETFEEDAPPPHY.

It belongs to the SlyX family.

In Pseudomonas syringae pv. syringae (strain B728a), this protein is Protein SlyX homolog.